The sequence spans 338 residues: Holliday junction branch migration complex subunit RuvB (338 aa).

The interval 4 to 184 (ADRLMSAAAV…FGIVQRLEFY (181 aa)) is large ATPase domain (RuvB-L). Residues Ile23, Arg24, Gly65, Lys68, Thr69, Thr70, 131-133 (EDY), Arg174, Tyr184, and Arg221 contribute to the ATP site. Thr69 is a binding site for Mg(2+). A small ATPAse domain (RuvB-S) region spans residues 185–255 (QTGDLQHIVS…VAVSALNMLN (71 aa)). A head domain (RuvB-H) region spans residues 258-338 (TEGFDFMDRK…GLEEHGGDPE (81 aa)). DNA-binding residues include Arg294, Arg313, and Arg318.

This sequence belongs to the RuvB family. Homohexamer. Forms an RuvA(8)-RuvB(12)-Holliday junction (HJ) complex. HJ DNA is sandwiched between 2 RuvA tetramers; dsDNA enters through RuvA and exits via RuvB. An RuvB hexamer assembles on each DNA strand where it exits the tetramer. Each RuvB hexamer is contacted by two RuvA subunits (via domain III) on 2 adjacent RuvB subunits; this complex drives branch migration. In the full resolvosome a probable DNA-RuvA(4)-RuvB(12)-RuvC(2) complex forms which resolves the HJ.

Its subcellular location is the cytoplasm. The catalysed reaction is ATP + H2O = ADP + phosphate + H(+). In terms of biological role, the RuvA-RuvB-RuvC complex processes Holliday junction (HJ) DNA during genetic recombination and DNA repair, while the RuvA-RuvB complex plays an important role in the rescue of blocked DNA replication forks via replication fork reversal (RFR). RuvA specifically binds to HJ cruciform DNA, conferring on it an open structure. The RuvB hexamer acts as an ATP-dependent pump, pulling dsDNA into and through the RuvAB complex. RuvB forms 2 homohexamers on either side of HJ DNA bound by 1 or 2 RuvA tetramers; 4 subunits per hexamer contact DNA at a time. Coordinated motions by a converter formed by DNA-disengaged RuvB subunits stimulates ATP hydrolysis and nucleotide exchange. Immobilization of the converter enables RuvB to convert the ATP-contained energy into a lever motion, pulling 2 nucleotides of DNA out of the RuvA tetramer per ATP hydrolyzed, thus driving DNA branch migration. The RuvB motors rotate together with the DNA substrate, which together with the progressing nucleotide cycle form the mechanistic basis for DNA recombination by continuous HJ branch migration. Branch migration allows RuvC to scan DNA until it finds its consensus sequence, where it cleaves and resolves cruciform DNA. The polypeptide is Holliday junction branch migration complex subunit RuvB (Sodalis glossinidius (strain morsitans)).